Reading from the N-terminus, the 220-residue chain is Endonuclease NucS (220 aa).

The protein belongs to the NucS endonuclease family.

The protein localises to the cytoplasm. Cleaves both 3' and 5' ssDNA extremities of branched DNA structures. The polypeptide is Endonuclease NucS (Parafrankia sp. (strain EAN1pec)).